Reading from the N-terminus, the 465-residue chain is Alpha-2A adrenergic receptor (465 aa).

Over 1–48 the chain is Extracellular; it reads MFRQEQPLAEGSFAPMGSLQPDAGNSSWNGTEAPGGGTRATPYSLQVT. N25 and N29 each carry an N-linked (GlcNAc...) asparagine glycan. The helical transmembrane segment at 49 to 74 threads the bilayer; that stretch reads LTLVCLAGLLMLFTVFGNVLVIIAVF. Residues 75–85 are Cytoplasmic-facing; the sequence is TSRALKAPQNL. Residues 86 to 111 form a helical membrane-spanning segment; the sequence is FLVSLASADILVATLVIPFSLANEVM. Residues 112–121 are Extracellular-facing; sequence GYWYFGKVWC. A disulfide bond links C121 and C203. A helical membrane pass occupies residues 122–144; sequence EIYLALDVLFCTSSIVHLCAISL. The Cytoplasmic portion of the chain corresponds to 145–164; it reads DRYWSITQAIEYNLKRTPRR. A helical membrane pass occupies residues 165–188; that stretch reads IKAIIVTVWVISAVISFPPLISIE. Topologically, residues 189-207 are extracellular; that stretch reads KKGAGGGQQPAEPSCKIND. The helical transmembrane segment at 208-232 threads the bilayer; it reads QKWYVISSSIGSFFAPCLIMILVYV. At 233-389 the chain is on the cytoplasmic side; sequence RIYQIAKRRT…RQNREKRFTF (157 aa). The interval 242-377 is disordered; it reads TRVPPSRRGP…RAGGAKASRW (136 aa). Residues 313 to 330 show a composition bias toward basic and acidic residues; sequence SSEHAERPQGPGKPERGP. S346 carries the post-translational modification Phosphoserine. Over residues 353-364 the composition is skewed to gly residues; it reads GAAGPGASGSGQ. Residue R368 is modified to Omega-N-methylarginine. The helical transmembrane segment at 390–414 threads the bilayer; that stretch reads VLAVVIGVFVVCWFPFFFTYTLIAV. The Extracellular segment spans residues 415–424; sequence GCPVPYQLFN. Residues 425–445 traverse the membrane as a helical segment; that stretch reads FFFWFGYCNSSLNPVIYTIFN. Topologically, residues 446–465 are cytoplasmic; it reads HDFRRAFKKILCRGDRKRIV. Residue C457 is the site of S-palmitoyl cysteine attachment.

It belongs to the G-protein coupled receptor 1 family. Adrenergic receptor subfamily. ADRA2A sub-subfamily. Expressed in brain.

The protein localises to the cell membrane. Functionally, alpha-2 adrenergic receptors mediate the catecholamine-induced inhibition of adenylate cyclase through the action of G proteins. The sequence is that of Alpha-2A adrenergic receptor from Rattus norvegicus (Rat).